Reading from the N-terminus, the 397-residue chain is Oxygen-dependent coproporphyrinogen-III oxidase, chloroplastic (397 aa).

The segment at 76-95 (ESDMGSNVTSNSSSVRGRFE) is disordered. Over residues 79–90 (MGSNVTSNSSSV) the composition is skewed to polar residues. Residues 135 to 144 (VLQDGAVFEK) form an important for dimerization region. Ser185 provides a ligand contact to substrate. Residue His199 is the Proton donor of the active site. Substrate is bound by residues 201–203 (NYR) and 355–360 (GGRIES). Positions 337–372 (YVEFNLVYDRGTTFGLKTGGRIESILVSLPLTARWE) are important for dimerization.

It belongs to the aerobic coproporphyrinogen-III oxidase family. Homodimer.

It is found in the plastid. The protein localises to the chloroplast. It catalyses the reaction coproporphyrinogen III + O2 + 2 H(+) = protoporphyrinogen IX + 2 CO2 + 2 H2O. It participates in porphyrin-containing compound metabolism; protoporphyrin-IX biosynthesis; protoporphyrinogen-IX from coproporphyrinogen-III (O2 route): step 1/1. Functionally, involved in the heme and chlorophyll biosynthesis. Catalyzes the aerobic oxidative decarboxylation of propionate groups of rings A and B of coproporphyrinogen-III to yield the vinyl groups in protoporphyrinogen-IX. The sequence is that of Oxygen-dependent coproporphyrinogen-III oxidase, chloroplastic (CPX) from Nicotiana tabacum (Common tobacco).